We begin with the raw amino-acid sequence, 148 residues long: MQLTVKALKGKEAHIQVSEGDTVLAVKRLVEEKLQVPVSQQRLLFRGKSLADEHCLSHYSIGPGSRLNLMVKDQVAPEGHSGNNTAWKSLSVILRKHFSPADAERVLEYVQKDYERSLSLLSLDDIERLATRILHPQYSEAADLGFLD.

Positions 1–76 constitute a Ubiquitin-like domain; it reads MQLTVKALKG…LNLMVKDQVA (76 aa).

As to quaternary structure, component of the bag6/bat3 complex.

The protein localises to the cytoplasm. The protein resides in the cytosol. It is found in the nucleus. Functionally, as part of a cytosolic protein quality control complex, the bag6/bat3 complex, maintains misfolded and hydrophobic patches-containing proteins in a soluble state and participates in their proper delivery to the endoplasmic reticulum or alternatively can promote their sorting to the proteasome where they undergo degradation. The bag6/bat3 complex is involved in the post-translational delivery of tail-anchored/type II transmembrane proteins to the endoplasmic reticulum membrane. Similarly, the bag6/bat3 complex also functions as a sorting platform for proteins of the secretory pathway that are mislocalized to the cytosol either delivering them to the proteasome for degradation or to the endoplasmic reticulum. The bag6/bat3 complex also plays a role in the endoplasmic reticulum-associated degradation (ERAD), a quality control mechanism that eliminates unwanted proteins of the endoplasmic reticulum through their retrotranslocation to the cytosol and their targeting to the proteasome. It maintains these retrotranslocated proteins in an unfolded yet soluble state condition in the cytosol to ensure their proper delivery to the proteasome. The protein is Ubiquitin-like protein 4A (ubl4a) of Xenopus laevis (African clawed frog).